We begin with the raw amino-acid sequence, 128 residues long: MREGDSGYFSCYDGNRFRLVILASQRAHELSSGACTAVARKGDKNTVVALREIVGEQLDLAAVFKLAVNRCRKYLEEFTNAREVAAARSSQAAPKSAPGQEIGKSFREKDPSAAAFLDQEQFFSGGGE.

Positions 87-106 (ARSSQAAPKSAPGQEIGKSF) are disordered.

It belongs to the RNA polymerase subunit omega family. The RNAP catalytic core consists of 2 alpha, 1 beta, 1 beta' and 1 omega subunit. When a sigma factor is associated with the core the holoenzyme is formed, which can initiate transcription.

The enzyme catalyses RNA(n) + a ribonucleoside 5'-triphosphate = RNA(n+1) + diphosphate. Its function is as follows. Promotes RNA polymerase assembly. Latches the N- and C-terminal regions of the beta' subunit thereby facilitating its interaction with the beta and alpha subunits. This Anaplasma marginale (strain Florida) protein is DNA-directed RNA polymerase subunit omega.